A 387-amino-acid chain; its full sequence is Decapping nuclease RAI1 (387 aa).

Residue Glu-172 participates in a divalent metal cation binding. A Phosphoserine modification is found at Ser-198. Position 221 (Glu-221) interacts with substrate. Residues Asp-223, Glu-241, and Leu-242 each contribute to the a divalent metal cation site. Residues Lys-243 and Gln-267 each contribute to the substrate site. The interaction with RAT1 stretch occupies residues Ile-273–Lys-387.

This sequence belongs to the DXO/Dom3Z family. In terms of assembly, interacts with RAT1, RTT103 and pre-60S ribosomal subunits. Interacts with RAT1; the interaction is direct, stabilizes RAT1 protein structure and stimulates its exoribonuclease activity. The interaction also stimulates RAI1 pyrophosphohydrolase activity, probably by recruiting it to mRNA substrates. It depends on a divalent metal cation as a cofactor.

The protein resides in the nucleus. The enzyme catalyses a 5'-end NAD(+)-phospho-ribonucleoside in mRNA + H2O = a 5'-end phospho-ribonucleoside in mRNA + NAD(+) + H(+). It catalyses the reaction a 5'-end (N(7)-methyl 5'-triphosphoguanosine)-ribonucleoside-ribonucleotide in mRNA + H2O = a (N(7)-methyl 5'-triphosphoguanosine)-nucleoside + a 5'-end phospho-ribonucleoside in mRNA + H(+). It carries out the reaction a 5'-end triphospho-ribonucleoside in mRNA + H2O = a 5'-end phospho-ribonucleoside in mRNA + diphosphate + H(+). Decapping enzyme for NAD-capped RNAs: specifically hydrolyzes the nicotinamide adenine dinucleotide (NAD) cap from a subset of RNAs by removing the entire NAD moiety from the 5'-end of an NAD-capped RNA. The NAD-cap is present at the 5'-end of some RNAs and snoRNAs. In contrast to the canonical 5'-end N7 methylguanosine (m7G) cap, the NAD cap promotes mRNA decay. Also acts as a non-canonical decapping enzyme that removes the entire cap structure of m7G capped or incompletely capped RNAs. Has decapping activity toward incomplete 5'-end m7G cap mRNAs such as unmethylated 5'-end-capped RNA (cap0), while it has no activity toward 2'-O-ribose methylated m7G cap (cap1). Also possesses RNA 5'-pyrophosphohydrolase activity by hydrolyzing the 5'-end triphosphate to release pyrophosphates. Stimulates exoribonuclease activity of RAT1, allowing it to degrade RNAs with stable secondary structure more effectively. Required for the processing of nuclear mRNA and rRNA precursors. May promote termination of transcription by RNA polymerase II. This is Decapping nuclease RAI1 from Saccharomyces cerevisiae (strain ATCC 204508 / S288c) (Baker's yeast).